The primary structure comprises 444 residues: Xylose isomerase (444 aa).

2 residues coordinate Mg(2+): aspartate 307 and aspartate 309.

This sequence belongs to the xylose isomerase family. In terms of assembly, homotetramer. The cofactor is Mg(2+).

It localises to the cytoplasm. It catalyses the reaction alpha-D-xylose = alpha-D-xylulofuranose. The protein is Xylose isomerase of Thermotoga neapolitana (strain ATCC 49049 / DSM 4359 / NBRC 107923 / NS-E).